The sequence spans 222 residues: Superoxide dismutase [Mn], mitochondrial (222 aa).

Residues 1-24 constitute a mitochondrion transit peptide; that stretch reads MLCRAACSTGRRLGPVAGAAGSRH. Histidine 50 provides a ligand contact to Mn(2+). At tyrosine 58 the chain carries 3'-nitrotyrosine. Lysine 68 and lysine 75 each carry N6-acetyllysine; alternate. N6-succinyllysine; alternate occurs at positions 68 and 75. Histidine 98 contributes to the Mn(2+) binding site. An N6-acetyllysine modification is found at lysine 114. N6-acetyllysine; alternate occurs at positions 122 and 130. N6-succinyllysine; alternate is present on residues lysine 122 and lysine 130. Positions 183 and 187 each coordinate Mn(2+). The residue at position 202 (lysine 202) is an N6-acetyllysine.

This sequence belongs to the iron/manganese superoxide dismutase family. Homotetramer. It depends on Mn(2+) as a cofactor. Post-translationally, nitrated under oxidative stress. Nitration coupled with oxidation inhibits the catalytic activity. In terms of processing, acetylation at Lys-122 decreases enzymatic activity. Deacetylated by SIRT3 upon exposure to ionizing radiations or after long fasting. Polyubiquitinated; leading to proteasomal degradation. Deubiquitinated by USP36 which increases protein stability.

The protein localises to the mitochondrion matrix. The catalysed reaction is 2 superoxide + 2 H(+) = H2O2 + O2. Its function is as follows. Destroys superoxide anion radicals which are normally produced within the cells and which are toxic to biological systems. This Mus musculus (Mouse) protein is Superoxide dismutase [Mn], mitochondrial (Sod2).